The following is a 51-amino-acid chain: Large ribosomal subunit protein eL39 (51 aa).

Residues Lys-32 to Ala-51 form a disordered region.

It belongs to the eukaryotic ribosomal protein eL39 family.

In Pyrobaculum arsenaticum (strain DSM 13514 / JCM 11321 / PZ6), this protein is Large ribosomal subunit protein eL39.